A 269-amino-acid chain; its full sequence is MAEVPELASEMMAYYSGNEDDLFFEVDGPKQMKCSFQDLDLCPLDGGIQLQISHEHYNKGFRQAVSVVVAMEKLRKMLVPCPQIFQDNDLSTLIPFIFEEEPVFLDTRNNDACVHDAPVRSLHCTLRDAQLKSLVMSGPYELKALHLQGQDLEQQVVFFMSFVQGEESNDKIPVALGLKAKNLYLSCVLKDDKPTLQLESVDPKNYPKKKMEKRFVFNKIEINNKLEFESAQFPNWYISTSQAENMPVFLGGTRGGQDITDFTMQFVSS.

A propeptide spanning residues 1–116 (MAEVPELASE…TRNNDACVHD (116 aa)) is cleaved from the precursor.

The protein belongs to the IL-1 family. As to quaternary structure, monomer. In its precursor form, weakly interacts with full-length MEFV; the mature cytokine does not interact at all. Interacts with integrins ITGAV:ITGBV and ITGA5:ITGB1; integrin-binding is required for IL1B signaling. Interacts with cargo receptor TMED10; the interaction is direct and is required for the secretion of IL1B mature form. Interacts with HSP90AB1; the interaction facilitates cargo translocation into the ERGIC. Interacts with HSP90B1; the interaction facilitates cargo translocation into the ERGIC.

It is found in the cytoplasm. The protein resides in the cytosol. Its subcellular location is the secreted. The protein localises to the lysosome. It localises to the extracellular exosome. Functionally, potent pro-inflammatory cytokine. Initially discovered as the major endogenous pyrogen, induces prostaglandin synthesis, neutrophil influx and activation, T-cell activation and cytokine production, B-cell activation and antibody production, and fibroblast proliferation and collagen production. Promotes Th17 differentiation of T-cells. Synergizes with IL12/interleukin-12 to induce IFNG synthesis from T-helper 1 (Th1) cells. Plays a role in angiogenesis by inducing VEGF production synergistically with TNF and IL6. Involved in transduction of inflammation downstream of pyroptosis: its mature form is specifically released in the extracellular milieu by passing through the gasdermin-D (GSDMD) pore. In Macaca nemestrina (Pig-tailed macaque), this protein is Interleukin-1 beta (IL1B).